We begin with the raw amino-acid sequence, 645 residues long: Cytochrome c oxidase subunit 1 (645 aa).

Residues 8–28 form a helical membrane-spanning segment; sequence LNYFYFSMWTGLSGAALATMI. Ca(2+) is bound by residues Glu31 and Gly36. His54 contributes to the Fe(II)-heme a binding site. 8 consecutive transmembrane segments (helical) span residues 56 to 76, 90 to 110, 247 to 267, 282 to 302, 337 to 357, 376 to 396, 410 to 430, and 438 to 458; these read LIMV…NFLI, LNSI…KIAF, VLSV…LTLI, VLIP…AIVT, LFWF…FGVA, IWAV…HMYL, ITIM…LTLA, and LVFL…FTGM. His343 serves as a coordination point for Cu cation. The segment at residues 343 to 347 is a cross-link (1'-histidyl-3'-tyrosine (His-Tyr)); that stretch reads HPEVY. O2 is bound at residue Tyr347. Residues His392 and His393 each coordinate Cu cation. Mg(2+) contacts are provided by His470 and Asp471. 3 consecutive transmembrane segments (helical) span residues 475–495, 513–533, and 555–575; these read VVAH…FTGL, FLHL…MFFL, and LASC…FGIF. His478 serves as a coordination point for heme a3. His480 lines the Fe(II)-heme a pocket.

This sequence belongs to the heme-copper respiratory oxidase family. As to quaternary structure, component of the cytochrome c oxidase (complex IV, CIV), a multisubunit enzyme composed of a catalytic core of 3 subunits and several supernumerary subunits. The complex exists as a monomer or a dimer and forms supercomplexes (SCs) in the inner mitochondrial membrane with ubiquinol-cytochrome c oxidoreductase (cytochrome b-c1 complex, complex III, CIII). Requires heme as cofactor. Cu cation serves as cofactor.

It localises to the mitochondrion inner membrane. It carries out the reaction 4 Fe(II)-[cytochrome c] + O2 + 8 H(+)(in) = 4 Fe(III)-[cytochrome c] + 2 H2O + 4 H(+)(out). Its pathway is energy metabolism; oxidative phosphorylation. In terms of biological role, component of the cytochrome c oxidase, the last enzyme in the mitochondrial electron transport chain which drives oxidative phosphorylation. The respiratory chain contains 3 multisubunit complexes succinate dehydrogenase (complex II, CII), ubiquinol-cytochrome c oxidoreductase (cytochrome b-c1 complex, complex III, CIII) and cytochrome c oxidase (complex IV, CIV), that cooperate to transfer electrons derived from NADH and succinate to molecular oxygen, creating an electrochemical gradient over the inner membrane that drives transmembrane transport and the ATP synthase. Cytochrome c oxidase is the component of the respiratory chain that catalyzes the reduction of oxygen to water. Electrons originating from reduced cytochrome c in the intermembrane space (IMS) are transferred via the dinuclear copper A center (CU(A)) of subunit 2 and heme A of subunit 1 to the active site in subunit 1, a binuclear center (BNC) formed by heme A3 and copper B (CU(B)). The BNC reduces molecular oxygen to 2 water molecules using 4 electrons from cytochrome c in the IMS and 4 protons from the mitochondrial matrix. In Paramecium tetraurelia, this protein is Cytochrome c oxidase subunit 1 (COI).